The following is a 1822-amino-acid chain: ADP-ribosylation factor guanine nucleotide-exchange factor sec72 (1822 aa).

Disordered regions lie at residues 1 to 54 and 66 to 126; these read MQDA…NGMD and DAVV…RASL. At Ser44 the chain carries Phosphoserine. Positions 72-84 are enriched in polar residues; the sequence is DINTEDSSLSPAK. Over residues 85–110 the composition is skewed to basic and acidic residues; the sequence is QENEKSPEGIEQKYQEEDLKDDKKSN. 2 positions are modified to phosphoserine: Ser122 and Ser125. An HUS box motif is present at residues 547–551; that stretch reads NYDCD. At Thr597 the chain carries Phosphothreonine. Ser653 carries the phosphoserine modification. Thr654 carries the phosphothreonine modification. Ser669 bears the Phosphoserine mark. The SEC7 domain maps to 701 to 889; the sequence is QFESNKQRKK…GFVYDDILKN (189 aa). The interval 898-1106 is HDS1 domain; sequence ELAAIAPLMN…NARVRRKNVN (209 aa). A Phosphoserine modification is found at Ser1110. Disordered stretches follow at residues 1111 to 1131 and 1584 to 1610; these read NSIRHVSGSTSRSTRTRSLSK and ENENTQLSHKRGGSLPETSRSISTSSI. Composition is skewed to low complexity over residues 1117–1130 and 1597–1610; these read SGSTSRSTRTRSLS and SLPETSRSISTSSI. A phosphoserine mark is found at Ser1606 and Ser1609.

Its subcellular location is the cytoplasm. It localises to the golgi apparatus. The protein localises to the trans-Golgi network. It is found in the cytoplasmic vesicle. The protein resides in the COPI-coated vesicle membrane. Its subcellular location is the COPII-coated vesicle membrane. Functionally, guanine exchange factor that acts as an activator of arf1 at the trans-Golgi net-work and is thus involved in vesicular budding and traffic between compartments of the Golgi apparatus. Activation of Arf (ADP-ribosylation factor) GTPases is essential for vesicle formation via recruitment of cargo adapters and coat proteins necessary for Golgi trafficking. Involved in the resistance to tamoxifen (TAM), an anticancer drug used to treat estrogen receptor (ER)-positive breast cancer. The polypeptide is ADP-ribosylation factor guanine nucleotide-exchange factor sec72 (Schizosaccharomyces pombe (strain 972 / ATCC 24843) (Fission yeast)).